The primary structure comprises 135 residues: Galectin-1 (135 aa).

The residue at position 2 (Ala-2) is an N-acetylalanine. In terms of domain architecture, Galectin spans 4–135 (GLVASNLNLK…DFKIKCVAFE (132 aa)). N6-acetyllysine is present on residues Lys-13, Lys-19, and Lys-29. Ser-30 carries the phosphoserine modification. A beta-D-galactoside is bound by residues 45–49 (HFNPR), His-53, Asn-62, and 69–72 (WGTE). Lys-108 carries the post-translational modification N6-acetyllysine; alternate. The residue at position 108 (Lys-108) is an N6-succinyllysine; alternate. N6-acetyllysine is present on Lys-128.

As to quaternary structure, binds LGALS3BP. Interacts with CD2, CD3, CD4, CD6, CD7, CD43, ALCAM and CD45. Interacts with laminin. Interacts with SUSD2. Exists in a reversible and active monomer-homodimer equilibrium, the mononomer/dimer state is regulated by lectin concentration. Interacts with cargo receptor TMED10; the interaction mediates the translocation from the cytoplasm into the ERGIC (endoplasmic reticulum-Golgi intermediate compartment) and thereby secretion.

Its subcellular location is the cytoplasm. The protein resides in the secreted. It is found in the extracellular space. It localises to the extracellular matrix. In terms of biological role, lectin that binds beta-galactoside and a wide array of complex carbohydrates. Plays a role in regulating apoptosis, cell proliferation and cell differentiation. Inhibits CD45 protein phosphatase activity and therefore the dephosphorylation of Lyn kinase. Strong inducer of T-cell apoptosis. In Cricetulus griseus (Chinese hamster), this protein is Galectin-1 (LGALS1).